The primary structure comprises 481 residues: ATP synthase subunit beta, chloroplastic (481 aa).

An ATP-binding site is contributed by 161 to 168 (GGAGVGKT).

The protein belongs to the ATPase alpha/beta chains family. F-type ATPases have 2 components, CF(1) - the catalytic core - and CF(0) - the membrane proton channel. CF(1) has five subunits: alpha(3), beta(3), gamma(1), delta(1), epsilon(1). CF(0) has four main subunits: a(1), b(1), b'(1) and c(9-12).

The protein localises to the plastid. Its subcellular location is the chloroplast thylakoid membrane. It catalyses the reaction ATP + H2O + 4 H(+)(in) = ADP + phosphate + 5 H(+)(out). Produces ATP from ADP in the presence of a proton gradient across the membrane. The catalytic sites are hosted primarily by the beta subunits. The sequence is that of ATP synthase subunit beta, chloroplastic from Pylaiella littoralis (Seaweed).